The sequence spans 217 residues: MITVALAKGALLNDSVARFQSAGLDFSAVLDPGNRQLMVPSHCGRARALLVRNGDVPVYVAYGQAQLGVVGYDVLREHQMPVAQLVDLGFGGCRMAVAVKASSGYQHAADLPPHCRVASKFTHCAREFFDALDLPVELVHLTGSVELGPLTGIAEAIVDLVATGRTLRDNGLVAIEELFQSSARLIGHPLALRLDRGDLQLIVEAMRIQESLPKNPA.

The protein belongs to the ATP phosphoribosyltransferase family. Short subfamily. Heteromultimer composed of HisG and HisZ subunits.

The protein localises to the cytoplasm. The catalysed reaction is 1-(5-phospho-beta-D-ribosyl)-ATP + diphosphate = 5-phospho-alpha-D-ribose 1-diphosphate + ATP. The protein operates within amino-acid biosynthesis; L-histidine biosynthesis; L-histidine from 5-phospho-alpha-D-ribose 1-diphosphate: step 1/9. Its function is as follows. Catalyzes the condensation of ATP and 5-phosphoribose 1-diphosphate to form N'-(5'-phosphoribosyl)-ATP (PR-ATP). Has a crucial role in the pathway because the rate of histidine biosynthesis seems to be controlled primarily by regulation of HisG enzymatic activity. This chain is ATP phosphoribosyltransferase, found in Prochlorococcus marinus (strain MIT 9313).